The sequence spans 132 residues: Chaperone protein SycT (132 aa).

In terms of assembly, binds to YopT.

Its function is as follows. Functions as a specific chaperone for YopT. This Yersinia pestis protein is Chaperone protein SycT (sycT).